The sequence spans 167 residues: uncharacterized protein (167 aa).

This sequence to B.subtilis XkdI.

This is an uncharacterized protein from Bacillus subtilis (strain 168).